The following is a 102-amino-acid chain: MICOS complex subunit MIC12 (102 aa).

A helical membrane pass occupies residues 4–26; the sequence is VLKLTSVTLAASSLAAAGYFYAF.

This sequence belongs to the MICOS complex subunit Mic12 family. Component of the mitochondrial contact site and cristae organizing system (MICOS) complex.

Its subcellular location is the mitochondrion inner membrane. Functionally, component of the MICOS complex, a large protein complex of the mitochondrial inner membrane that plays crucial roles in the maintenance of crista junctions, inner membrane architecture, and formation of contact sites to the outer membrane. In Lachancea thermotolerans (strain ATCC 56472 / CBS 6340 / NRRL Y-8284) (Yeast), this protein is MICOS complex subunit MIC12 (AIM5).